The sequence spans 342 residues: Phosphoribosylformylglycinamidine cyclo-ligase (342 aa).

This sequence belongs to the AIR synthase family.

It localises to the cytoplasm. It carries out the reaction 2-formamido-N(1)-(5-O-phospho-beta-D-ribosyl)acetamidine + ATP = 5-amino-1-(5-phospho-beta-D-ribosyl)imidazole + ADP + phosphate + H(+). The protein operates within purine metabolism; IMP biosynthesis via de novo pathway; 5-amino-1-(5-phospho-D-ribosyl)imidazole from N(2)-formyl-N(1)-(5-phospho-D-ribosyl)glycinamide: step 2/2. The polypeptide is Phosphoribosylformylglycinamidine cyclo-ligase (Staphylococcus aureus (strain Mu3 / ATCC 700698)).